Reading from the N-terminus, the 430-residue chain is Asparagine--tRNA ligase (430 aa).

Belongs to the class-II aminoacyl-tRNA synthetase family. Homodimer.

It localises to the cytoplasm. It catalyses the reaction tRNA(Asn) + L-asparagine + ATP = L-asparaginyl-tRNA(Asn) + AMP + diphosphate + H(+). The sequence is that of Asparagine--tRNA ligase from Pelotomaculum thermopropionicum (strain DSM 13744 / JCM 10971 / SI).